Reading from the N-terminus, the 307-residue chain is Elongation factor Ts (307 aa).

The tract at residues 79 to 82 (TDFV) is involved in Mg(2+) ion dislocation from EF-Tu.

The protein belongs to the EF-Ts family.

The protein resides in the cytoplasm. Associates with the EF-Tu.GDP complex and induces the exchange of GDP to GTP. It remains bound to the aminoacyl-tRNA.EF-Tu.GTP complex up to the GTP hydrolysis stage on the ribosome. The chain is Elongation factor Ts (tsf) from Bartonella quintana (strain Toulouse) (Rochalimaea quintana).